Reading from the N-terminus, the 161-residue chain is MISAPSPDHLLLEQDLATPEIRCGEIEERWRHIRTSWPHVFFAVSAPQRPNGPKEFGFRFEYTGYRQTPVTAQLWDLEADAPLPHAKWPTGTYVVPSVFRKDWQQGNCLYIPCDRISIQGHTAWLNDHPSRLWQPARGIICYLEQLYELFNQGDYTGLVSA.

Cysteine 113 acts as the Glycyl thioester intermediate in catalysis.

Functionally, component of the Bil (bacterial ISG15-like) antiviral defense system, composed of BilA, BilB, BilC and BilD. The Bil system specifically conjugates a ubiquitin-like moiety (bilA) to the bacteriophage central tail fiber (CTF, or tip attachment protein J) via reactions involving E1 (bilD) and E2 (bilB). Modifies CTF of phage SECphi27 and SECphi4, which probably interferes with assembly of the phage tail. Also modifies T5 baseplate hub protein pb3 (gene D16), but not gp27 of phage T6 (Bil defends against T6). BilB probably accepts ubiquitin from the BilA-BilD (E1) complex and catalyzes its covalent attachment to target protein (CTF). Bil-encoding bacteria produce mostly defective phage SECphi27, many of which have phage assembly defects, including no tails. SECphi27 phage progeny produced in E.coli with the Bil system inject less DNA into naive host cells, maybe because the phage are less able to adsorb and inject their DNA into host cells. In terms of biological role, expression of the Bil system in E.coli (strain MG1655) confers about 100-fold resistance to phage SECphi27, SECphi18, SECphi6, SECphi4 and T5, but not to SECphi17. When cells expressing the Bil system are infected by phage SECphi27 at low multiplicity of infection (0.03 MOI) the culture survives, at 3.0 MOI the culture collapses at the same time as cells without the Bil system. This chain is Bacterial E2-like ubiquitin protein BilB, found in Collimonas sp. (strain OK412).